We begin with the raw amino-acid sequence, 102 residues long: Lipopolysaccharide assembly protein A (102 aa).

Over 1–2 (MK) the chain is Cytoplasmic. Residues 3 to 23 (YLLIFLLVLAIFVISVTLGAQ) traverse the membrane as a helical segment. Residues 24 to 43 (NDQQVTFNYLLAQGEYRIST) lie on the Periplasmic side of the membrane. Residues 44–64 (LLAVLFAAGFAIGWLICGLFW) form a helical membrane-spanning segment. A coiled-coil region spans residues 64 to 92 (WLRVRVSLARAERKIKRLENQLSPATDVA). The Cytoplasmic portion of the chain corresponds to 65–102 (LRVRVSLARAERKIKRLENQLSPATDVAVVPHSSAAKE).

Belongs to the LapA family.

The protein localises to the cell inner membrane. Its function is as follows. Involved in the assembly of lipopolysaccharide (LPS). The sequence is that of Lipopolysaccharide assembly protein A from Escherichia coli (strain K12).